The chain runs to 409 residues: Peptidase T (409 aa).

Residue H78 coordinates Zn(2+). D80 is a catalytic residue. D140 serves as a coordination point for Zn(2+). E173 serves as the catalytic Proton acceptor. E174, D196, and H379 together coordinate Zn(2+).

It belongs to the peptidase M20B family. Zn(2+) serves as cofactor.

The protein localises to the cytoplasm. The catalysed reaction is Release of the N-terminal residue from a tripeptide.. Functionally, cleaves the N-terminal amino acid of tripeptides. This is Peptidase T from Salmonella heidelberg (strain SL476).